The primary structure comprises 193 residues: Auxin-induced protein 22D (193 aa).

The disordered stretch occupies residues 16 to 68 (ATELRLGLPGSDEPEKRATARSNKRSSPEASDEESISNGSDVTKEDNVVPPAK). An EAR-like (transcriptional repression) motif is present at residues 19 to 23 (LRLGL). The region spanning 97-184 (GMYVKVSMAG…SCKRLRIMKG (88 aa)) is the PB1 domain.

It belongs to the Aux/IAA family. Homodimers and heterodimers.

It is found in the nucleus. Functionally, aux/IAA proteins are short-lived transcriptional factors that function as repressors of early auxin response genes at low auxin concentrations. Repression is thought to result from the interaction with auxin response factors (ARFs), proteins that bind to the auxin-responsive promoter element (AuxRE). Formation of heterodimers with ARF proteins may alter their ability to modulate early auxin response genes expression. The chain is Auxin-induced protein 22D (AUX22D) from Vigna radiata var. radiata (Mung bean).